Reading from the N-terminus, the 347-residue chain is Inosamine-phosphate amidinotransferase 1 (347 aa).

Residues Asp-179 and His-227 contribute to the active site. Cys-332 acts as the Amidino-cysteine intermediate in catalysis.

This sequence belongs to the amidinotransferase family. In terms of assembly, homodimer.

The catalysed reaction is 1-amino-1-deoxy-scyllo-inositol 4-phosphate + L-arginine = 1-guanidino-1-deoxy-scyllo-inositol 4-phosphate + L-ornithine. It participates in antibiotic biosynthesis; streptomycin biosynthesis. Catalyzes two non-consecutive transamidination reactions. It converts scyllo-inosamine 4-phosphate into N-amidino-scyllo-inosamine 4-phosphate and N1-amidinostreptamine 6-phosphate into streptidine 6-phosphate. In Streptomyces griseus, this protein is Inosamine-phosphate amidinotransferase 1 (strB1).